Reading from the N-terminus, the 417-residue chain is UDP-N-acetylglucosamine 1-carboxyvinyltransferase 2 (417 aa).

K22 to N23 is a phosphoenolpyruvate binding site. R92 contacts UDP-N-acetyl-alpha-D-glucosamine. C116 serves as the catalytic Proton donor. The residue at position 116 (C116) is a 2-(S-cysteinyl)pyruvic acid O-phosphothioketal. UDP-N-acetyl-alpha-D-glucosamine-binding positions include R121–L125, D305, and I327.

The protein belongs to the EPSP synthase family. MurA subfamily.

Its subcellular location is the cytoplasm. It catalyses the reaction phosphoenolpyruvate + UDP-N-acetyl-alpha-D-glucosamine = UDP-N-acetyl-3-O-(1-carboxyvinyl)-alpha-D-glucosamine + phosphate. It participates in cell wall biogenesis; peptidoglycan biosynthesis. In terms of biological role, cell wall formation. Adds enolpyruvyl to UDP-N-acetylglucosamine. The polypeptide is UDP-N-acetylglucosamine 1-carboxyvinyltransferase 2 (Caldanaerobacter subterraneus subsp. tengcongensis (strain DSM 15242 / JCM 11007 / NBRC 100824 / MB4) (Thermoanaerobacter tengcongensis)).